Here is a 243-residue protein sequence, read N- to C-terminus: 3-deoxy-manno-octulosonate cytidylyltransferase (243 aa).

It belongs to the KdsB family.

The protein localises to the cytoplasm. It carries out the reaction 3-deoxy-alpha-D-manno-oct-2-ulosonate + CTP = CMP-3-deoxy-beta-D-manno-octulosonate + diphosphate. It functions in the pathway nucleotide-sugar biosynthesis; CMP-3-deoxy-D-manno-octulosonate biosynthesis; CMP-3-deoxy-D-manno-octulosonate from 3-deoxy-D-manno-octulosonate and CTP: step 1/1. The protein operates within bacterial outer membrane biogenesis; lipopolysaccharide biosynthesis. Functionally, activates KDO (a required 8-carbon sugar) for incorporation into bacterial lipopolysaccharide in Gram-negative bacteria. The sequence is that of 3-deoxy-manno-octulosonate cytidylyltransferase from Helicobacter pylori (strain G27).